The sequence spans 245 residues: 1-(5-phosphoribosyl)-5-[(5-phosphoribosylamino)methylideneamino] imidazole-4-carboxamide isomerase (245 aa).

Catalysis depends on Asp-7, which acts as the Proton acceptor. The active-site Proton donor is the Asp-129.

Belongs to the HisA/HisF family.

The protein resides in the cytoplasm. The catalysed reaction is 1-(5-phospho-beta-D-ribosyl)-5-[(5-phospho-beta-D-ribosylamino)methylideneamino]imidazole-4-carboxamide = 5-[(5-phospho-1-deoxy-D-ribulos-1-ylimino)methylamino]-1-(5-phospho-beta-D-ribosyl)imidazole-4-carboxamide. The protein operates within amino-acid biosynthesis; L-histidine biosynthesis; L-histidine from 5-phospho-alpha-D-ribose 1-diphosphate: step 4/9. This is 1-(5-phosphoribosyl)-5-[(5-phosphoribosylamino)methylideneamino] imidazole-4-carboxamide isomerase from Shewanella sp. (strain W3-18-1).